The sequence spans 75 residues: ATP synthase subunit c (75 aa).

The next 2 membrane-spanning stretches (helical) occupy residues 8-28 and 52-72; these read FIAI…IANI and IGAA…MLLI.

This sequence belongs to the ATPase C chain family. In terms of assembly, F-type ATPases have 2 components, F(1) - the catalytic core - and F(0) - the membrane proton channel. F(1) has five subunits: alpha(3), beta(3), gamma(1), delta(1), epsilon(1). F(0) has three main subunits: a(1), b(2) and c(10-14). The alpha and beta chains form an alternating ring which encloses part of the gamma chain. F(1) is attached to F(0) by a central stalk formed by the gamma and epsilon chains, while a peripheral stalk is formed by the delta and b chains.

It is found in the cell membrane. Functionally, f(1)F(0) ATP synthase produces ATP from ADP in the presence of a proton or sodium gradient. F-type ATPases consist of two structural domains, F(1) containing the extramembraneous catalytic core and F(0) containing the membrane proton channel, linked together by a central stalk and a peripheral stalk. During catalysis, ATP synthesis in the catalytic domain of F(1) is coupled via a rotary mechanism of the central stalk subunits to proton translocation. Key component of the F(0) channel; it plays a direct role in translocation across the membrane. A homomeric c-ring of between 10-14 subunits forms the central stalk rotor element with the F(1) delta and epsilon subunits. The polypeptide is ATP synthase subunit c (Wolbachia pipientis wMel).